The sequence spans 699 residues: MAREYKIEDYRNFGIMAHIDAGKTTTTERILYYTGKSHKIGEVHDGAATMDWMEQEQERGITITSAATTTFWKGRDGKMRRFNIIDTPGHVDFTIEVERSLRVLDGAIALLDANAGVEPQTETVWRQAEKYNVPRMIFCNKMDKTGADFYRSVEMIKTRLGATAVVMQLPIGAETEFKGVIDLIEMNALIWRDESLGAQWDVVEIPDDLKAKADEYREKLIETVVEIDEEAMEDYLNGIMPDNDKIRALVRRGTIDVKFHPMFCGTAFKNKGVQPLLDAVVDYLPSPLDIPAIKGIDFKTEAEIERHADDSEPLSMLAFKIMNDPFVGSLTFARIYSGKLEKGTSVINTVKDKRERVGRMLQMHSNSREDIEEAFAGDIVALAGLKETTTGDTLCDPLKPVILERMEFPEPVIQIAIEPKTKGDQEKMGLALNRLAAEDPSFRVKTDEESGQTIIAGMGELHLDILVDRMRREFKVEATVGAPQVAYRETITRQHEEDYTHKKQSGGTGQFARVKIIFEPNPEGEDFKFESKIVGGAVPKEYIPGVQKGIESVLSSGPLAGFPMLGVKATLIDGAYHDVDSSVLAFEIASRACFREAAKKAGAQLLEPMMKVEVVTPEDYVGDVIGDLNSRRGQIQGQESRGITIVISAHVPLANMFKYVDNLRSMSQGRAQYSMTFDHYSPVPSNVAQEIQAKYSGQK.

The tr-type G domain occupies 8 to 288 (EDYRNFGIMA…AVVDYLPSPL (281 aa)). Residues 17–24 (AHIDAGKT), 86–90 (DTPGH), and 140–143 (NKMD) each bind GTP.

Belongs to the TRAFAC class translation factor GTPase superfamily. Classic translation factor GTPase family. EF-G/EF-2 subfamily.

It localises to the cytoplasm. Catalyzes the GTP-dependent ribosomal translocation step during translation elongation. During this step, the ribosome changes from the pre-translocational (PRE) to the post-translocational (POST) state as the newly formed A-site-bound peptidyl-tRNA and P-site-bound deacylated tRNA move to the P and E sites, respectively. Catalyzes the coordinated movement of the two tRNA molecules, the mRNA and conformational changes in the ribosome. This Agrobacterium fabrum (strain C58 / ATCC 33970) (Agrobacterium tumefaciens (strain C58)) protein is Elongation factor G.